The following is a 91-amino-acid chain: uncharacterized protein (91 aa).

Positions 1 to 20 (MFSRVLALLAVLLLSANTWA) are cleaved as a signal peptide.

Belongs to the BhsA/McbA family.

The protein resides in the periplasm. This is an uncharacterized protein from Escherichia coli O157:H7.